The sequence spans 494 residues: Solute carrier family 2, facilitated glucose transporter member 3 (494 aa).

The Cytoplasmic segment spans residues 1 to 10; that stretch reads MGTTKVTAPL. The chain crosses the membrane as a helical span at residues 11–32; it reads IFAISVATIGSFQFGYNTGVIN. Residues 33–64 are Extracellular-facing; the sequence is APEAIIKDFLNYTLEERSEPPPSSVLLTSLWS. N-linked (GlcNAc...) asparagine glycosylation occurs at Asn43. Residues 65–85 traverse the membrane as a helical segment; it reads LSVAIFSVGGMIGSFSVGLFV. At 86–90 the chain is on the cytoplasmic side; that stretch reads NRFGR. A helical transmembrane segment spans residues 91–111; the sequence is GNSMLIVNLLAIAGGCLMGFC. The Extracellular portion of the chain corresponds to 112 to 118; that stretch reads KIAESVE. A helical membrane pass occupies residues 119–142; sequence MLILGRLIIGLFCGLCTGFVPMYI. The Cytoplasmic portion of the chain corresponds to 143 to 153; the sequence is GEISPTALRGA. The chain crosses the membrane as a helical span at residues 154-174; it reads FGTLNQLGIVIGILVAQIFGL. Position 159 (Gln159) interacts with D-glucose. Over 175–183 the chain is Extracellular; that stretch reads KVILGTEDL. Residues 184-204 form a helical membrane-spanning segment; that stretch reads WPLLLGFTILPAIIQCAALPF. The Cytoplasmic segment spans residues 205–269; it reads CPESPRFLLI…LFRAPNYRQP (65 aa). A Phosphothreonine modification is found at Thr232. The helical transmembrane segment at 270-290 threads the bilayer; sequence IIISIMLQLSQQLSGINAVFY. The interval 277–279 is important for selectivity against fructose; it reads QLS. D-glucose is bound by residues 280-281 and Asn286; that span reads QQ. The Extracellular segment spans residues 291-304; the sequence is YSTGIFKDAGVQEP. A helical membrane pass occupies residues 305–325; it reads VYATIGAGVVNTIFTVVSVFL. Asn315 is a D-glucose binding site. Over 326–331 the chain is Cytoplasmic; it reads VERAGR. Residues 332 to 352 traverse the membrane as a helical segment; that stretch reads RTLHLIGLGGMAFCSILMTIS. Over 353 to 363 the chain is Extracellular; it reads LLLKDNYSWMS. Asn358 is a glycosylation site (N-linked (GlcNAc...) asparagine). A helical transmembrane segment spans residues 364-389; the sequence is FICIGAILVFVAFFEIGPGPIPWFIV. Positions 378 and 386 each coordinate D-glucose. Topologically, residues 390-399 are cytoplasmic; sequence AELFGQGPRP. A helical membrane pass occupies residues 400–420; the sequence is AAMAVAGCSNWTSNFLVGLLF. Residues 421–429 lie on the Extracellular side of the membrane; it reads PSAAFYLGA. The chain crosses the membrane as a helical span at residues 430–450; sequence YVFIVFTVFLVIFWVFTFFKV. Residues 451–494 are Cytoplasmic-facing; the sequence is PETRGRTFEEITRAFEGQTQTGTRGEKGPIMEMNSIQPTKDTNA. The tract at residues 469-494 is disordered; that stretch reads TQTGTRGEKGPIMEMNSIQPTKDTNA. The segment covering 484–494 has biased composition (polar residues); sequence NSIQPTKDTNA. Ser485 bears the Phosphoserine mark. Thr492 is subject to Phosphothreonine.

It belongs to the major facilitator superfamily. Sugar transporter (TC 2.A.1.1) family. Glucose transporter subfamily. As to quaternary structure, interacts with SMIM43; the interaction may promote SLC2A1-mediated glucose transport to meet the energy needs of mesendoderm differentiation.

Its subcellular location is the cell membrane. The protein resides in the perikaryon. It localises to the cell projection. It catalyses the reaction D-glucose(out) = D-glucose(in). It carries out the reaction D-galactose(in) = D-galactose(out). Deoxyglucose transport is inhibited by D-glucose, D-galactose and maltose. Galactose transport is inhibited by D-glucose and maltose. Its function is as follows. Facilitative glucose transporter. Can also mediate the uptake of various other monosaccharides across the cell membrane. Mediates the uptake of glucose, 2-deoxyglucose, galactose, mannose, xylose and fucose, and probably also dehydroascorbate. Does not mediate fructose transport. Required for mesendoderm differentiation. The sequence is that of Solute carrier family 2, facilitated glucose transporter member 3 from Bos taurus (Bovine).